We begin with the raw amino-acid sequence, 520 residues long: Transactivator/viroplasmin protein (520 aa).

The tract at residues 486–520 is disordered; the sequence is VQDASADSGPKDGPPPTRSIVEKEDVPTTSSKQVD.

It belongs to the caulimoviridae viroplasmin family.

Its subcellular location is the host cytoplasm. Enhances the ribosomal termination-reinitiation event leading to the translation of major open reading frames on the polycistronic viral RNAs. This is Transactivator/viroplasmin protein from Cauliflower mosaic virus (strain BBC) (CaMV).